The primary structure comprises 199 residues: Nuclear protein UL4 (199 aa).

It belongs to the alphaherpesvirinae HHV-1 UL4 family.

Its subcellular location is the host nucleus. The protein is Nuclear protein UL4 of Homo sapiens (Human).